A 67-amino-acid polypeptide reads, in one-letter code: ATP synthase protein 8 (67 aa).

The chain crosses the membrane as a helical span at residues 8-24 (TWFTTVLSTTITLFILM). Lysine 54 carries the post-translational modification N6-acetyllysine; alternate. N6-succinyllysine; alternate is present on lysine 54. Position 57 is an N6-acetyllysine (lysine 57).

It belongs to the ATPase protein 8 family. F-type ATPases have 2 components, CF(1) - the catalytic core - and CF(0) - the membrane proton channel. Component of an ATP synthase complex composed of ATP5PB, ATP5MC1, ATP5F1E, ATP5PD, ATP5ME, ATP5PF, ATP5MF, MT-ATP6, MT-ATP8, ATP5F1A, ATP5F1B, ATP5F1D, ATP5F1C, ATP5PO, ATP5MG, ATP5MK and ATP5MJ. Interacts with PRICKLE3.

The protein resides in the mitochondrion membrane. Its function is as follows. Mitochondrial membrane ATP synthase (F(1)F(0) ATP synthase or Complex V) produces ATP from ADP in the presence of a proton gradient across the membrane which is generated by electron transport complexes of the respiratory chain. F-type ATPases consist of two structural domains, F(1) - containing the extramembraneous catalytic core and F(0) - containing the membrane proton channel, linked together by a central stalk and a peripheral stalk. During catalysis, ATP synthesis in the catalytic domain of F(1) is coupled via a rotary mechanism of the central stalk subunits to proton translocation. Part of the complex F(0) domain. Minor subunit located with subunit a in the membrane. The polypeptide is ATP synthase protein 8 (MT-ATP8) (Microtus pennsylvanicus (Meadow vole)).